The primary structure comprises 260 residues: Malonyl-[acyl-carrier protein] O-methyltransferase (260 aa).

Belongs to the methyltransferase superfamily.

It carries out the reaction malonyl-[ACP] + S-adenosyl-L-methionine = malonyl-[ACP] methyl ester + S-adenosyl-L-homocysteine. It participates in cofactor biosynthesis; biotin biosynthesis. Converts the free carboxyl group of a malonyl-thioester to its methyl ester by transfer of a methyl group from S-adenosyl-L-methionine (SAM). It allows to synthesize pimeloyl-ACP via the fatty acid synthetic pathway. This is Malonyl-[acyl-carrier protein] O-methyltransferase from Chlorobium phaeovibrioides (strain DSM 265 / 1930) (Prosthecochloris vibrioformis (strain DSM 265)).